A 505-amino-acid polypeptide reads, in one-letter code: MSRQDKKLTGVFGHPVSDRENSMTAGPRGPLLMQDIYFLEQMSQFDREVIPERRMHAKGSGAFGTFTVTKDITKYTNAKIFSEIGKQTEMFARFSTVAGERGAADAERDIRGFALKFYTEEGNWDLVGNNTPVFFFRDPKLFVSLNRAVKRDPRTNMRDAQNNWDFWTGLPEALHQVTILMSDRGIPKDLRHMHGFGSHTYSMYNDSGERVWVKFHFRTQQGIENLTDEVAAEIIATDRDSSQRDLFEAIEKGDYPKWTMYIQVMTEEQAKNHKDNPFDLTKVWYHDEYPLIEVGEFELNRNPDNYFMDVEQAAFAPTNIIPGLDFSPDKMLQGRLFSYGDAQRYRLGVNHWQIPVNQPKGVGIENICPFSRDGQMRVVDNNQGGGTHYYPNNHGKFDSQPEYKKPPFPTDGYGYEYNQRQDDDNYFEQPGKLFRLQSEDAKERIFTNTANAMEGVTDDVKRRHIRHCYKADPEYGKGVAKALGIDINSIDLETENDETYENFEK.

The interval Met1–Ala25 is disordered. Catalysis depends on residues His56 and Asn129. Tyr339 is a binding site for heme.

Belongs to the catalase family. Homodimer. The cofactor is heme.

The catalysed reaction is 2 H2O2 = O2 + 2 H2O. Its function is as follows. Decomposes hydrogen peroxide into water and oxygen; serves to protect cells from the toxic effects of hydrogen peroxide. The sequence is that of Catalase (katA) from Staphylococcus aureus (strain MRSA252).